Consider the following 505-residue polypeptide: Lysine--tRNA ligase (505 aa).

Positions 415 and 422 each coordinate Mg(2+).

This sequence belongs to the class-II aminoacyl-tRNA synthetase family. In terms of assembly, homodimer. The cofactor is Mg(2+).

It localises to the cytoplasm. It catalyses the reaction tRNA(Lys) + L-lysine + ATP = L-lysyl-tRNA(Lys) + AMP + diphosphate. This Edwardsiella ictaluri (strain 93-146) protein is Lysine--tRNA ligase.